The chain runs to 276 residues: Formamidopyrimidine-DNA glycosylase (276 aa).

Catalysis depends on P2, which acts as the Schiff-base intermediate with DNA. E3 (proton donor) is an active-site residue. K60 functions as the Proton donor; for beta-elimination activity in the catalytic mechanism. Residues H93 and R112 each coordinate DNA. The segment at 240–274 (HVYGRKQQPCHHCDTAIEKTVVGGRGTHYCPNCQP) adopts an FPG-type zinc-finger fold. The active-site Proton donor; for delta-elimination activity is R264.

Belongs to the FPG family. In terms of assembly, monomer. The cofactor is Zn(2+).

It carries out the reaction Hydrolysis of DNA containing ring-opened 7-methylguanine residues, releasing 2,6-diamino-4-hydroxy-5-(N-methyl)formamidopyrimidine.. It catalyses the reaction 2'-deoxyribonucleotide-(2'-deoxyribose 5'-phosphate)-2'-deoxyribonucleotide-DNA = a 3'-end 2'-deoxyribonucleotide-(2,3-dehydro-2,3-deoxyribose 5'-phosphate)-DNA + a 5'-end 5'-phospho-2'-deoxyribonucleoside-DNA + H(+). Involved in base excision repair of DNA damaged by oxidation or by mutagenic agents. Acts as a DNA glycosylase that recognizes and removes damaged bases. Has a preference for oxidized purines, such as 7,8-dihydro-8-oxoguanine (8-oxoG). Has AP (apurinic/apyrimidinic) lyase activity and introduces nicks in the DNA strand. Cleaves the DNA backbone by beta-delta elimination to generate a single-strand break at the site of the removed base with both 3'- and 5'-phosphates. The chain is Formamidopyrimidine-DNA glycosylase from Shouchella clausii (strain KSM-K16) (Alkalihalobacillus clausii).